Consider the following 1259-residue polypeptide: MVMMLWYVLPLLLCSPCLLIQIPDEYKGHHVLEPPVITEQSPRRLVVFPTDDISLKCEARGRPQVEFRWTKDGIHFKPKEELGVVVHEAPYSGSFTIEGNNSFAQRFQGIYRCYASNNLGTAMSHEIQLVAEGAPKWPKETVKPVEVEEGESVVLPCNPPPSAAPLRIYWMNSKILHIKQDERVSMGQNGDLYFANVLTSDNHSDYICNAHFPGTRTIIQKEPIDLRVKPTNSMIDRKPRLLFPTNSSSHLVALQGQSLILECIAEGFPTPTIKWLHPSDPMPTDRVIYQNHNKTLQLLNVGEEDDGEYTCLAENSLGSARHAYYVTVEAAPYWLQKPQSHLYGPGETARLDCQVQGRPQPEVTWRINGMSIEKVNKDQKYRIEQGSLILSNVQPSDTMVTQCEARNQHGLLLANAYIYVVQLPARILTKDNQTYMAVEGSTAYLLCKAFGAPVPSVQWLDEEGTTVLQDERFFPYANGHLGIRDLQANDTGRYFCQAANDQNNVTILANLQVKEATQITQGPRSTIEKKGARVTFTCQASFDPSLQASITWRGDGRDLQERGDSDKYFIEDGQLVIKSLDYSDQGDYSCVASTELDEVESRAQLLVVGSPGPVPHLELSDRHLLKQSQVHLSWSPAEDHNSPIEKYDIEFEDKEMAPEKWFSLGKVPGNQTSTTLKLSPYVHYTFRVTAINKYGPGEPSPVSETVVTPEAAPEKNPVDVRGEGNETNNMVITWKPLRWMDWNAPQIQYRVQWRPLGKQETWKEQTVSDPFLVVSNTSTFVPYEIKVQAVNNQGKGPEPQVTIGYSGEDYPQVSPELEDITIFNSSTVLVRWRPVDLAQVKGHLRGYNVTYWWKGSQRKHSKRHVHKSHMVVPANTTSAILSGLRPYSSYHVEVQAFNGRGLGPASEWTFSTPEGVPGHPEALHLECQSDTSLLLHWQPPLSHNGVLTGYLLSYHPLDGESKEQLFFNLSDPELRTHNLTNLNPDLQYRFQLQATTHQGPGEAIVREGGTMALFGKPDFGNISVTAGENYSVVSWVPREGQCNFRFHILFKALPEGKVSPDHQPQPQYVSYNQSSYTQWDLQPDTKYEIHLMREKVLLHHLAVKTNGTGPVRVSTTGSFASEGWFIAFVSAIILLLLILLILCFIKRSKGGKYSVKDKEDTQVDSEARPMKDETFGEYRSLESDNEEKAFGSSQPSLNGDIKPLGSDDSLADYGGSVDVQFNEDGSFIGQYSGKKEKEAAGGNDSSGATSPINPAVALE.

The N-terminal stretch at 1 to 19 (MVMMLWYVLPLLLCSPCLL) is a signal peptide. The Extracellular portion of the chain corresponds to 20–1122 (IQIPDEYKGH…VSTTGSFASE (1103 aa)). 6 Ig-like C2-type domains span residues 35–128 (PVIT…HEIQ), 138–225 (PKET…EPID), 239–327 (PRLL…YYVT), 332–419 (PYWL…AYIY), 424–506 (PARI…NNVT), and 517–600 (TQIT…DEVE). Disulfide bonds link Cys-57-Cys-113 and Cys-157-Cys-208. N-linked (GlcNAc...) asparagine glycans are attached at residues Asn-100, Asn-202, Asn-246, and Asn-293. Disulfide bonds link Cys-263-Cys-311 and Cys-353-Cys-403. N-linked (GlcNAc...) asparagine glycosylation is found at Asn-432, Asn-489, and Asn-504. A disulfide bridge links Cys-447 with Cys-496. The cysteines at positions 538 and 590 are disulfide-linked. 2 short sequence motifs (cell attachment site) span residues 553–555 (RGD) and 562–564 (RGD). Fibronectin type-III domains follow at residues 613–711 (PVPH…TPEA), 716–809 (NPVD…SGED), 811–916 (PQVS…PEGV), 919–1014 (HPEA…MALF), and 1016–1116 (KPDF…VSTT). N-linked (GlcNAc...) asparagine glycosylation occurs at Asn-670. Positions 697–724 (GEPSPVSETVVTPEAAPEKNPVDVRGEG) are disordered. Positions 712–724 (APEKNPVDVRGEG) are enriched in basic and acidic residues. 11 N-linked (GlcNAc...) asparagine glycosylation sites follow: Asn-725, Asn-776, Asn-824, Asn-848, Asn-875, Asn-968, Asn-978, Asn-1021, Asn-1029, Asn-1072, and Asn-1106. The chain crosses the membrane as a helical span at residues 1123-1145 (GWFIAFVSAIILLLLILLILCFI). The Cytoplasmic segment spans residues 1146–1259 (KRSKGGKYSV…SPINPAVALE (114 aa)). Residues Ser-1165, Arg-1179, Ser-1180, Ser-1183, Ser-1196, Ser-1245, Ser-1246, and Ser-1250 each carry the phosphoserine modification. Disordered regions lie at residues 1182–1209 (ESDNEEKAFGSSQPSLNGDIKPLGSDDS) and 1228–1259 (IGQYSGKKEKEAAGGNDSSGATSPINPAVALE). Residues 1243–1252 (NDSSGATSPI) show a composition bias toward polar residues.

Belongs to the immunoglobulin superfamily. L1/neurofascin/NgCAM family. In terms of assembly, interacts with SHTN1; the interaction occurs in axonal growth cones. Interacts with isoform 2 of BSG. As to expression, isoform 2 is predominantly found in the brain, while isoform 1 is found in the peripheral nervous system.

Its subcellular location is the cell membrane. The protein resides in the cell projection. The protein localises to the growth cone. Its function is as follows. Neural cell adhesion molecule involved in the dynamics of cell adhesion and in the generation of transmembrane signals at tyrosine kinase receptors. During brain development, critical in multiple processes, including neuronal migration, axonal growth and fasciculation, and synaptogenesis. In the mature brain, plays a role in the dynamics of neuronal structure and function, including synaptic plasticity. The chain is Neural cell adhesion molecule L1 (L1cam) from Rattus norvegicus (Rat).